Consider the following 527-residue polypeptide: 2-isopropylmalate synthase (527 aa).

A Pyruvate carboxyltransferase domain is found at 18–280 (IRIFDTTLRD…QTNINSKRLV (263 aa)). D27, H215, H217, and N251 together coordinate Mn(2+). Residues 405-527 (TLVDYEVTSG…ASDPGELPQP (123 aa)) are regulatory domain.

Belongs to the alpha-IPM synthase/homocitrate synthase family. LeuA type 1 subfamily. As to quaternary structure, homodimer. Mn(2+) serves as cofactor.

The protein localises to the cytoplasm. It carries out the reaction 3-methyl-2-oxobutanoate + acetyl-CoA + H2O = (2S)-2-isopropylmalate + CoA + H(+). It functions in the pathway amino-acid biosynthesis; L-leucine biosynthesis; L-leucine from 3-methyl-2-oxobutanoate: step 1/4. In terms of biological role, catalyzes the condensation of the acetyl group of acetyl-CoA with 3-methyl-2-oxobutanoate (2-ketoisovalerate) to form 3-carboxy-3-hydroxy-4-methylpentanoate (2-isopropylmalate). The chain is 2-isopropylmalate synthase from Rhodopirellula baltica (strain DSM 10527 / NCIMB 13988 / SH1).